Consider the following 271-residue polypeptide: Urease accessory protein UreD (271 aa).

It belongs to the UreD family. As to quaternary structure, ureD, UreF and UreG form a complex that acts as a GTP-hydrolysis-dependent molecular chaperone, activating the urease apoprotein by helping to assemble the nickel containing metallocenter of UreC. The UreE protein probably delivers the nickel.

It is found in the cytoplasm. Required for maturation of urease via the functional incorporation of the urease nickel metallocenter. The chain is Urease accessory protein UreD from Haemophilus influenzae (strain PittEE).